Here is a 131-residue protein sequence, read N- to C-terminus: Profilin (131 aa).

Belongs to the profilin family. Occurs in many kinds of cells as a complex with monomeric actin in a 1:1 ratio.

It is found in the cytoplasm. It localises to the cytoskeleton. Functionally, binds to actin and affects the structure of the cytoskeleton. At high concentrations, profilin prevents the polymerization of actin, whereas it enhances it at low concentrations. By binding to PIP2, it inhibits the formation of IP3 and DG. This chain is Profilin, found in Prunus dulcis (Almond).